The following is a 259-amino-acid chain: Imidazole glycerol phosphate synthase subunit HisF (259 aa).

Catalysis depends on residues D11 and D130.

Belongs to the HisA/HisF family. In terms of assembly, heterodimer of HisH and HisF.

The protein resides in the cytoplasm. It carries out the reaction 5-[(5-phospho-1-deoxy-D-ribulos-1-ylimino)methylamino]-1-(5-phospho-beta-D-ribosyl)imidazole-4-carboxamide + L-glutamine = D-erythro-1-(imidazol-4-yl)glycerol 3-phosphate + 5-amino-1-(5-phospho-beta-D-ribosyl)imidazole-4-carboxamide + L-glutamate + H(+). It participates in amino-acid biosynthesis; L-histidine biosynthesis; L-histidine from 5-phospho-alpha-D-ribose 1-diphosphate: step 5/9. Functionally, IGPS catalyzes the conversion of PRFAR and glutamine to IGP, AICAR and glutamate. The HisF subunit catalyzes the cyclization activity that produces IGP and AICAR from PRFAR using the ammonia provided by the HisH subunit. The protein is Imidazole glycerol phosphate synthase subunit HisF of Desulfosudis oleivorans (strain DSM 6200 / JCM 39069 / Hxd3) (Desulfococcus oleovorans).